A 158-amino-acid polypeptide reads, in one-letter code: Transcription elongation factor GreA (158 aa).

Residues 8–74 (TKGGYNKLKD…TLERVLSTAT (67 aa)) are a coiled coil.

The protein belongs to the GreA/GreB family.

In terms of biological role, necessary for efficient RNA polymerase transcription elongation past template-encoded arresting sites. The arresting sites in DNA have the property of trapping a certain fraction of elongating RNA polymerases that pass through, resulting in locked ternary complexes. Cleavage of the nascent transcript by cleavage factors such as GreA or GreB allows the resumption of elongation from the new 3'terminus. GreA releases sequences of 2 to 3 nucleotides. The polypeptide is Transcription elongation factor GreA (Chloroherpeton thalassium (strain ATCC 35110 / GB-78)).